The sequence spans 134 residues: Small ribosomal subunit protein uS11 (134 aa).

The tract at residues 115–134 is disordered; sequence VTPIPTDSTRRKGGRRGRRL. The span at 125-134 shows a compositional bias: basic residues; the sequence is RKGGRRGRRL.

The protein belongs to the universal ribosomal protein uS11 family.

In Syntrichia ruralis (Great hairy screw-moss), this protein is Small ribosomal subunit protein uS11 (RPS14).